Reading from the N-terminus, the 483-residue chain is UDP-glucosyl transferase 73B2 (483 aa).

Histidine 22 functions as the Proton acceptor in the catalytic mechanism. Histidine 22 contributes to the an anthocyanidin binding site. Aspartate 133 functions as the Charge relay in the catalytic mechanism. UDP-alpha-D-glucose is bound by residues alanine 355, glutamine 357, histidine 372, tryptophan 375, asparagine 376, serine 377, and glutamate 380. Alanine 395 serves as a coordination point for an anthocyanidin. UDP-alpha-D-glucose contacts are provided by glutamate 396 and glutamine 397.

Belongs to the UDP-glycosyltransferase family. As to expression, expressed in roots and flowers.

The enzyme catalyses a 7-O-hydroxy-flavonol + UDP-alpha-D-glucose = a flavonol 7-O-beta-D-glucoside + UDP + H(+). Its pathway is secondary metabolite biosynthesis; flavonoid biosynthesis. Its function is as follows. Catalyzes the glycosylation of flavonoids from UDP-glucose. Uses a wide range of flavonoid substrates including flavonols (quercetin, kaempferol, isorhamnetin, 3-OH 7,2',4'-MeO-flavone), flavones (luteolin, apigenin), flavanones (naringenin, hesperetin), flavanonols (taxifolin), isoflavones (genistein, daidzein), flavonol glycosides (quercitrin, isoquercitrin, rutin), and chalcones (isoliquiritigenin). Specific for the C-7 position, with a 20-fold lower activity for the C-3 position. This chain is UDP-glucosyl transferase 73B2 (UGT73B2), found in Arabidopsis thaliana (Mouse-ear cress).